The chain runs to 684 residues: MEKDFTERSTKGQRKLANGVVENIESKLKNHLDNNNVINKSVNYEDVMCSNVKLSVHDDEYDIKNIKKDVCNLSKLSEERLSNNISLKDNNKVVKNPEIDTKTARQQYKKRLNSTQSTMNIEGNINNEKDDIIEDYDDGLIRNMDYEMSIVKNKRNNNNNNNNNNNNNNNNNNNNNNNNNNNNNNNNSNNVDNRKRNKNEECYDESYCISDNLDEITSYRNKLSLYNKLRMCFNYFGPGWIVAIAYLDPGNLCSNLNVGLIRSPDPTLEKDYSGYYLLWIMVYGHMLGFIFQVLSMRLGHVTGLDLASLCSKEFDRTTSTIIYVLVQIAIWGAHIQAIIGTFIALNLIFGISVKVAIFYTLFEAIIYSFLENKSLGLLENVLSFLVGILAVSFFVNVFMTPINFKELAISILYPRIPKGKEIDALALLGSIISAHIFYLHTNLTAKKKSVICNDLSLRRYNTLGTIESGGSLFLSCLTNCIIVLTFAEVNLKSFERRDQYNLFTAYEVMRKSFGKISMYIWSFGLLSSGNNSSFMCEYASKSVVEGFLNKKINTFVRVFTFRLMLFSLLYMFLTLNKYTLDQLTNFINVIQVLLLPMATIPLYRFSIHENVLGEFRLKKFPKFAVFLIIIAIIISNVLLTFLDFVHKETSLITIFFLVIFSFLYFGFIIYFFNIPIKKNYIQRN.

Over 1 to 228 (MEKDFTERST…YRNKLSLYNK (228 aa)) the chain is Cytoplasmic. The segment at 153–195 (NKRNNNNNNNNNNNNNNNNNNNNNNNNNNNNNNNNSNNVDNRK) is disordered. A compositionally biased stretch (low complexity) spans 156 to 191 (NNNNNNNNNNNNNNNNNNNNNNNNNNNNNNNNSNNV). Residues 229–247 (LRMCFNYFGPGWIVAIAYL) traverse the membrane as a helical segment. Topologically, residues 248–275 (DPGNLCSNLNVGLIRSPDPTLEKDYSGY) are vacuolar. The chain crosses the membrane as a helical span at residues 276–299 (YLLWIMVYGHMLGFIFQVLSMRLG). The Cytoplasmic portion of the chain corresponds to 300 to 319 (HVTGLDLASLCSKEFDRTTS). Residues 320 to 345 (TIIYVLVQIAIWGAHIQAIIGTFIAL) traverse the membrane as a helical segment. Residues 346–350 (NLIFG) lie on the Vacuolar side of the membrane. Residues 351 to 370 (ISVKVAIFYTLFEAIIYSFL) form a helical membrane-spanning segment. Over 371–381 (ENKSLGLLENV) the chain is Cytoplasmic. Residues 382 to 404 (LSFLVGILAVSFFVNVFMTPINF) traverse the membrane as a helical segment. The Vacuolar portion of the chain corresponds to 405–423 (KELAISILYPRIPKGKEID). A helical membrane pass occupies residues 424 to 445 (ALALLGSIISAHIFYLHTNLTA). At 446-465 (KKKSVICNDLSLRRYNTLGT) the chain is on the cytoplasmic side. The helical transmembrane segment at 466-487 (IESGGSLFLSCLTNCIIVLTFA) threads the bilayer. Topologically, residues 488–515 (EVNLKSFERRDQYNLFTAYEVMRKSFGK) are vacuolar. A helical membrane pass occupies residues 516–534 (ISMYIWSFGLLSSGNNSSF). At 535-554 (MCEYASKSVVEGFLNKKINT) the chain is on the cytoplasmic side. The helical transmembrane segment at 555–573 (FVRVFTFRLMLFSLLYMFL) threads the bilayer. The Vacuolar segment spans residues 574 to 584 (TLNKYTLDQLT). Residues 585–603 (NFINVIQVLLLPMATIPLY) traverse the membrane as a helical segment. Topologically, residues 604 to 622 (RFSIHENVLGEFRLKKFPK) are cytoplasmic. The chain crosses the membrane as a helical span at residues 623–645 (FAVFLIIIAIIISNVLLTFLDFV). Over 646-650 (HKETS) the chain is Vacuolar. Residues 651 to 673 (LITIFFLVIFSFLYFGFIIYFFN) form a helical membrane-spanning segment. Residues 674–684 (IPIKKNYIQRN) are Cytoplasmic-facing.

It belongs to the NRAMP (TC 2.A.55) family.

The protein localises to the vacuole membrane. The enzyme catalyses Fe(2+)(in) = Fe(2+)(out). In terms of biological role, iron transporter. Required for parasite development during the blood stages. Required for apicoplast biogenesis. Required for mitochondrial polarization. The polypeptide is Divalent metal transporter 1 (Plasmodium falciparum (isolate 3D7)).